A 215-amino-acid chain; its full sequence is Peroxiredoxin-5, mitochondrial (215 aa).

The N-terminal 53 residues, 1–53, are a transit peptide targeting the mitochondrion; sequence MGLAGVCVLRRSAGYILGGAARQSVAATAAARRRSEGGWASGGVRSFSRAAAA. In terms of domain architecture, Thioredoxin spans 57 to 215; that stretch reads IKVGDAIPAV…SLAPSIISQL (159 aa). K76 is subject to N6-acetyllysine. At K84 the chain carries N6-acetyllysine; alternate. The residue at position 84 (K84) is an N6-succinyllysine; alternate. The active-site Cysteine sulfenic acid (-SOH) intermediate is C101. C101 is lipidated: S-palmitoyl cysteine. C101 and C205 form a disulfide bridge. N6-succinyllysine is present on K117. S172 and S183 each carry phosphoserine. The short motif at 213–215 is the Microbody targeting signal element; sequence SQL.

It belongs to the peroxiredoxin family. Prx5 subfamily. As to quaternary structure, monomer. S-palmitoylated. Palmitoylation occurs on the active site, inhibiting its reactivity; therefore PRDX5 palmitoylation status determines its antioxidant capacity. Post-translationally, S-palmitoylated. Depalmitoylated by ABHD10.

Its subcellular location is the mitochondrion. It localises to the cytoplasm. It is found in the peroxisome matrix. The catalysed reaction is a hydroperoxide + [thioredoxin]-dithiol = an alcohol + [thioredoxin]-disulfide + H2O. In terms of biological role, thiol-specific peroxidase that catalyzes the reduction of hydrogen peroxide and organic hydroperoxides to water and alcohols, respectively. Plays a role in cell protection against oxidative stress by detoxifying peroxides and as sensor of hydrogen peroxide-mediated signaling events. This is Peroxiredoxin-5, mitochondrial (PRDX5) from Chlorocebus aethiops (Green monkey).